The primary structure comprises 592 residues: Transducer of Cdc42-dependent actin assembly protein 1 homolog (592 aa).

The F-BAR domain maps to 3–267; it reads DSCSWDQLWD…DIGLIDPSRD (265 aa). 2 disordered regions span residues 343–366 and 447–519; these read FGGG…QQRA and SATS…DELY. Residues 359–436 form the REM-1 domain; it reads TLPPQQRARK…IQKFKILLDD (78 aa). The stretch at 363-441 forms a coiled coil; the sequence is QQRARKIAGK…ILLDDVNAQL (79 aa). Positions 447 to 457 are enriched in polar residues; that stretch reads SATSVGGSDTP. Residues 459-474 are compositionally biased toward low complexity; it reads SIRSVSSASSGVTSRV. Residues 495-510 are compositionally biased toward polar residues; that stretch reads FSGSNGGSDTDPTING. Positions 527–589 constitute an SH3 domain; it reads PVLGEAIAQF…PSSYLKVTWF (63 aa).

Belongs to the FNBP1 family. As to quaternary structure, interacts (via SH3 domain) with wsp-1. Interacts with cdc-42 and (via SH3 domain) with wve-1. Expressed in the germline and specifically in the gonads.

The protein localises to the cell junction. The protein resides in the apical cell membrane. It is found in the basolateral cell membrane. It localises to the cytoplasmic vesicle. Its subcellular location is the cytoplasm. The protein localises to the perinuclear region. The protein resides in the recycling endosome. Plays a role in protein trafficking, actin organization and embryonic morphogenesis. Potentially acts as a cdc-42 effector. May play a role in hypodermal P-cell nuclear positioning. Together with toca-2, is required for protein trafficking regulating yolk protein clathrin-mediated endocytosis by oocytes during oogenesis and retrograde recycling and the sorting of recycling endosome cargo proteins such as mig-14. Also, together with toca-2, controls the distribution of actin at cell junctions. The polypeptide is Transducer of Cdc42-dependent actin assembly protein 1 homolog (Caenorhabditis elegans).